We begin with the raw amino-acid sequence, 882 residues long: Holliday junction resolvase MOC1, chloroplastic (882 aa).

Disordered regions lie at residues 87–148 (IRDG…QTPT) and 323–351 (TPAAASQTPPTTVTSCGTGSGAPATPRAA). Polar residues predominate over residues 91-111 (PNSNSRCSTVRTHATRSKSTG). The span at 112–125 (PSRATSSGPATAAP) shows a compositional bias: low complexity. The span at 134-148 (NDTQDGGLTSEQTPT) shows a compositional bias: polar residues. The span at 323-337 (TPAAASQTPPTTVTS) shows a compositional bias: low complexity. Residues D397, E552, N629, and D634 each coordinate Mg(2+). The interval 710 to 882 (KVERKAQARS…DGGVSGSESE (173 aa)) is disordered. A compositionally biased stretch (acidic residues) spans 732–743 (EEPEAQAEEEQA). Composition is skewed to low complexity over residues 744-758 (EAGTGVVAAAAGAAA), 769-783 (VESGSEAAVAEVAAG), 810-819 (SGKSSSKAEA), and 830-844 (ASVGSSSVGSSSVGS). 2 stretches are compositionally biased toward gly residues: residues 845 to 857 (SSGGGGGGGGGVK) and 868 to 882 (AKAGSDGGVSGSESE).

Mg(2+) serves as cofactor. The cofactor is Mn(2+).

The protein resides in the plastid. It is found in the chloroplast. It catalyses the reaction Endonucleolytic cleavage at a junction such as a reciprocal single-stranded crossover between two homologous DNA duplexes (Holliday junction).. Its function is as follows. A structure-specific endonuclease that resolves Holliday junction (HJ) intermediates during genetic recombination. Cleaves 4-way DNA junctions introducing paired nicks in opposing strands, leaving a 5'-terminal phosphate and a 3'-terminal hydroxyl group that are ligated to produce recombinant products. Mediates chloroplast nucleoid segregation during chloroplast division. The sequence is that of Holliday junction resolvase MOC1, chloroplastic from Chlamydomonas reinhardtii (Chlamydomonas smithii).